Consider the following 85-residue polypeptide: Probable oxaloacetate decarboxylase gamma chain (85 aa).

A helical membrane pass occupies residues 11-33 (AAALMVTGMGVVFIFLTILIFLV).

The protein belongs to the OadG family. In terms of assembly, heterotrimer of an alpha, a beta and a gamma subunit. It depends on Na(+) as a cofactor.

The protein resides in the cell membrane. The enzyme catalyses oxaloacetate + 2 Na(+)(in) + H(+) = pyruvate + 2 Na(+)(out) + CO2. In terms of biological role, catalyzes the decarboxylation of oxaloacetate coupled to Na(+) translocation. This is Probable oxaloacetate decarboxylase gamma chain from Vibrio vulnificus (strain CMCP6).